Consider the following 298-residue polypeptide: GTP cyclohydrolase FolE2 (298 aa).

It belongs to the GTP cyclohydrolase IV family.

The catalysed reaction is GTP + H2O = 7,8-dihydroneopterin 3'-triphosphate + formate + H(+). The protein operates within cofactor biosynthesis; 7,8-dihydroneopterin triphosphate biosynthesis; 7,8-dihydroneopterin triphosphate from GTP: step 1/1. Functionally, converts GTP to 7,8-dihydroneopterin triphosphate. The sequence is that of GTP cyclohydrolase FolE2 from Pseudomonas fluorescens (strain Pf0-1).